The following is a 341-amino-acid chain: Ribosomal RNA small subunit methyltransferase H (341 aa).

S-adenosyl-L-methionine is bound by residues 47 to 49 (GGY), Asp64, Phe91, Asp109, and Gln116.

Belongs to the methyltransferase superfamily. RsmH family.

It localises to the cytoplasm. It carries out the reaction cytidine(1402) in 16S rRNA + S-adenosyl-L-methionine = N(4)-methylcytidine(1402) in 16S rRNA + S-adenosyl-L-homocysteine + H(+). Functionally, specifically methylates the N4 position of cytidine in position 1402 (C1402) of 16S rRNA. The polypeptide is Ribosomal RNA small subunit methyltransferase H (Rhizobium rhizogenes (strain K84 / ATCC BAA-868) (Agrobacterium radiobacter)).